We begin with the raw amino-acid sequence, 525 residues long: ESX-1 secretion-associated protein EspE (525 aa).

Disordered regions lie at residues 244 to 341 (AVAG…PGAA) and 375 to 494 (ALQA…APVH). The span at 248-258 (DADDTTADDTA) shows a compositional bias: acidic residues. The segment covering 274–286 (ETSKEDGQSRHEN) has biased composition (basic and acidic residues). The span at 292–306 (SGGGGGATSGGGGGA) shows a compositional bias: gly residues. Low complexity-rich tracts occupy residues 307 to 319 (PSSA…AGTP), 332 to 341 (TPTDAQPGAA), and 375 to 397 (ALQA…AAAP). A compositionally biased stretch (basic and acidic residues) spans 411–440 (DPDAEGDKDSDKRDGEGKEDGTAPRDREST).

Its subcellular location is the cytoplasm. This chain is ESX-1 secretion-associated protein EspE, found in Mycolicibacterium smegmatis (strain ATCC 700084 / mc(2)155) (Mycobacterium smegmatis).